Here is a 534-residue protein sequence, read N- to C-terminus: Probable inorganic phosphate transporter 1-8 (534 aa).

At 1–21 the chain is on the cytoplasmic side; that stretch reads MPIKVLSSLDVARTQWYHFKA. The helical transmembrane segment at 22–42 threads the bilayer; the sequence is IIVAGMGLFTDAYDLFCIAPV. Topologically, residues 43-61 are extracellular; sequence MKMISHVYYNGDSINTAVL. The chain crosses the membrane as a helical span at residues 62–82; the sequence is STSYAIALLGTATGQLVFGYL. The Cytoplasmic portion of the chain corresponds to 83 to 90; sequence GDRVGRRR. A helical transmembrane segment spans residues 91 to 111; sequence VYGLCLIIMILSSFGCGFSVC. The Extracellular portion of the chain corresponds to 112-123; that stretch reads TTRRSCVMVSLG. Residues 124 to 144 form a helical membrane-spanning segment; that stretch reads FFRFFLGLGIGGDYPLSATIM. The Cytoplasmic portion of the chain corresponds to 145 to 153; the sequence is SEFANKRTR. The chain crosses the membrane as a helical span at residues 154-174; sequence GAFIAAVFSMQGLGILVSSAV. Residues 175 to 199 lie on the Extracellular side of the membrane; sequence TMAVCVAFKRSGGGLEVDAAAPTEA. The chain crosses the membrane as a helical span at residues 200-220; it reads DLAWRLILMIGALPAALTFYW. Topologically, residues 221–281 are cytoplasmic; it reads RMLMPETARY…KLFSRCFFRL (61 aa). The helical transmembrane segment at 282–302 threads the bilayer; that stretch reads HGRDLFAASFNWFLVDIVFYT. Topologically, residues 303-333 are extracellular; it reads SNLLLSHIFSHYSKKPSTAENVYDAAFEVAE. Residues 334–354 form a helical membrane-spanning segment; sequence LGAIIAACSTIPGYWFTVYFI. Topologically, residues 355–361 are cytoplasmic; the sequence is DKIGRVK. The chain crosses the membrane as a helical span at residues 362–382; it reads IQIMGFFFMAVIYLVAGIPYS. The Extracellular portion of the chain corresponds to 383-396; that stretch reads WYWSKHEHNNKGFM. Residues 397–417 form a helical membrane-spanning segment; the sequence is VLYGLVFFFCNFGPNTTTFII. The Cytoplasmic portion of the chain corresponds to 418 to 431; it reads PAEHFPARFRSTCH. The chain crosses the membrane as a helical span at residues 432-452; sequence GISGAAGKLGAIVGTVGFLWA. The Extracellular segment spans residues 453 to 472; sequence TKKMESDDKNQIYPEVNRMR. Residues 473–493 traverse the membrane as a helical segment; that stretch reads IAFLILGGVCIAGILVTYFFT. The Cytoplasmic segment spans residues 494-534; it reads KETMGRSLEENEHDQDNNAESEDEPQIVDGQSSVSTLLQTR. The tract at residues 501-534 is disordered; sequence LEENEHDQDNNAESEDEPQIVDGQSSVSTLLQTR. Residues 510–519 show a composition bias toward acidic residues; that stretch reads NNAESEDEPQ. S514 bears the Phosphoserine mark. Positions 522 to 534 are enriched in polar residues; that stretch reads DGQSSVSTLLQTR.

Belongs to the major facilitator superfamily. Phosphate:H(+) symporter (TC 2.A.1.9) family. As to expression, in roots.

Its subcellular location is the membrane. Its function is as follows. High-affinity transporter for external inorganic phosphate. In Arabidopsis thaliana (Mouse-ear cress), this protein is Probable inorganic phosphate transporter 1-8 (PHT1-8).